Reading from the N-terminus, the 687-residue chain is Glycine--tRNA ligase beta subunit (687 aa).

Belongs to the class-II aminoacyl-tRNA synthetase family. Tetramer of two alpha and two beta subunits.

Its subcellular location is the cytoplasm. The enzyme catalyses tRNA(Gly) + glycine + ATP = glycyl-tRNA(Gly) + AMP + diphosphate. This Geobacter sp. (strain M21) protein is Glycine--tRNA ligase beta subunit.